The chain runs to 277 residues: uncharacterized protein (277 aa).

This is an uncharacterized protein from Acanthamoeba polyphaga mimivirus (APMV).